Reading from the N-terminus, the 402-residue chain is N-acetyllactosaminide beta-1,6-N-acetylglucosaminyl-transferase (402 aa).

The Cytoplasmic segment spans residues 1-7 (MMGSWKH). The chain crosses the membrane as a helical; Signal-anchor for type II membrane protein span at residues 8–23 (CLFSASLISALIFVFV). The Lumenal segment spans residues 24-400 (YNTELWENKR…QSETAIQPSW (377 aa)). N41 carries an N-linked (GlcNAc...) asparagine glycan.

Belongs to the glycosyltransferase 14 family. As to expression, expressed in lens epithelium cells. In terms of tissue distribution, expressed in reticulocytes.

The protein localises to the golgi apparatus membrane. The catalysed reaction is a beta-D-Gal-(1-&gt;4)-beta-D-GlcNAc-(1-&gt;3)-beta-D-Gal-(1-&gt;4)-beta-D-GlcNAc derivative + UDP-N-acetyl-alpha-D-glucosamine = a beta-D-Gal-(1-&gt;4)-beta-D-GlcNAc-(1-&gt;3)-[beta-D-GlcNAc-(1-&gt;6)]-beta-D-Gal-(1-&gt;4)-N-acetyl-beta-D-glucosaminyl derivative + UDP + H(+). The protein operates within protein modification; protein glycosylation. Functionally, branching enzyme that converts linear into branched poly-N-acetyllactosaminoglycans. Introduces the blood group I antigen during embryonic development. It is closely associated with the development and maturation of erythroid cells. In terms of biological role, determines the expression of the blood group I antigen in erythrocytes. This chain is N-acetyllactosaminide beta-1,6-N-acetylglucosaminyl-transferase (GCNT2), found in Homo sapiens (Human).